The sequence spans 397 residues: Oxygen-dependent coproporphyrinogen-III oxidase, chloroplastic (397 aa).

Positions 76-95 (ESDMGSNVTSNSSSVRGRFE) are disordered. The span at 79-90 (MGSNVTSNSSSV) shows a compositional bias: polar residues. Residues 135–144 (VLQDGAVFEK) are important for dimerization. Serine 185 serves as a coordination point for substrate. The active-site Proton donor is histidine 199. Substrate-binding positions include 201 to 203 (NYR) and 355 to 360 (GGRIES). The important for dimerization stretch occupies residues 337–372 (YVEFNLVYDRGTTFGLKTGGRIESILVSLPLTARWE).

The protein belongs to the aerobic coproporphyrinogen-III oxidase family. In terms of assembly, homodimer.

The protein localises to the plastid. It localises to the chloroplast. The enzyme catalyses coproporphyrinogen III + O2 + 2 H(+) = protoporphyrinogen IX + 2 CO2 + 2 H2O. It participates in porphyrin-containing compound metabolism; protoporphyrin-IX biosynthesis; protoporphyrinogen-IX from coproporphyrinogen-III (O2 route): step 1/1. Its function is as follows. Involved in the heme and chlorophyll biosynthesis. Catalyzes the aerobic oxidative decarboxylation of propionate groups of rings A and B of coproporphyrinogen-III to yield the vinyl groups in protoporphyrinogen-IX. The polypeptide is Oxygen-dependent coproporphyrinogen-III oxidase, chloroplastic (CPX) (Nicotiana tabacum (Common tobacco)).